The following is a 190-amino-acid chain: Elongation factor P (190 aa).

Belongs to the elongation factor P family.

It localises to the cytoplasm. The protein operates within protein biosynthesis; polypeptide chain elongation. In terms of biological role, involved in peptide bond synthesis. Stimulates efficient translation and peptide-bond synthesis on native or reconstituted 70S ribosomes in vitro. Probably functions indirectly by altering the affinity of the ribosome for aminoacyl-tRNA, thus increasing their reactivity as acceptors for peptidyl transferase. The protein is Elongation factor P (efp) of Mycoplasma genitalium (strain ATCC 33530 / DSM 19775 / NCTC 10195 / G37) (Mycoplasmoides genitalium).